Reading from the N-terminus, the 2690-residue chain is Probable polyketide synthase 28 (2690 aa).

Residues 15 to 443 (YGDVAVIGIG…GSNVCLILSE (429 aa)) enclose the Ketosynthase family 3 (KS3) domain. Active-site for beta-ketoacyl synthase activity residues include Cys187, His326, and His366. Residues 651–684 (GVSADIIVGHSLGELSSSYSSGMIDFETLCHLIY) form an acyl/malonyl transferases region. Ser661 functions as the For acyl/malonyl transferase activity in the catalytic mechanism. A coiled-coil region spans residues 906–934 (NFKSQLTNINNNNNNINNNNNNNNNNNNN). The interval 916–946 (NNNNNINNNNNNNNNNNNNNNNNNNNNNNNN) is disordered. The segment at 973–1102 (HEKITNEGPS…GNFSLFKHNS (130 aa)) is N-terminal hotdog fold. Residues 973–1285 (HEKITNEGPS…CSSVSLANPS (313 aa)) enclose the PKS/mFAS DH domain. His1014 (proton acceptor; for dehydratase activity) is an active-site residue. The interval 1119 to 1285 (NFTTISKHDF…CSSVSLANPS (167 aa)) is C-terminal hotdog fold. Asp1188 serves as the catalytic Proton donor; for dehydratase activity. Residues 1401–1429 (LNHHNNSENKNKNNNNNNNSNNNENSNNE) are disordered. Positions 1412-1429 (KNNNNNNNSNNNENSNNE) are enriched in low complexity. Residues 2594-2671 (SDNEFIHSTI…QSIDIIKFGY (78 aa)) enclose the Carrier domain. The residue at position 2631 (Ser2631) is an O-(pantetheine 4'-phosphoryl)serine.

It depends on pantetheine 4'-phosphate as a cofactor.

Probable polyketide synthase. This chain is Probable polyketide synthase 28 (pks28), found in Dictyostelium discoideum (Social amoeba).